Consider the following 101-residue polypeptide: Putative pterin-4-alpha-carbinolamine dehydratase (101 aa).

It belongs to the pterin-4-alpha-carbinolamine dehydratase family.

It catalyses the reaction (4aS,6R)-4a-hydroxy-L-erythro-5,6,7,8-tetrahydrobiopterin = (6R)-L-erythro-6,7-dihydrobiopterin + H2O. The sequence is that of Putative pterin-4-alpha-carbinolamine dehydratase from Rhodopseudomonas palustris (strain HaA2).